We begin with the raw amino-acid sequence, 210 residues long: Putative 3-methyladenine DNA glycosylase (210 aa).

The protein belongs to the DNA glycosylase MPG family.

This is Putative 3-methyladenine DNA glycosylase from Corynebacterium glutamicum (strain R).